We begin with the raw amino-acid sequence, 393 residues long: F-box protein KIB4 (393 aa).

Positions 12 to 59 (AKQPILVLDLVRLVLERLSFVDFHRARCVSSVWYSASKSCIGGTNPTA) constitute an F-box domain.

It localises to the cytoplasm. The protein localises to the nucleus. Its subcellular location is the nucleolus. In terms of biological role, component of SCF(ASK-cullin-F-box) E3 ubiquitin ligase complexes, which may mediate the ubiquitination and subsequent proteasomal degradation of target proteins. Required for brassinosteroid (BR) signal transduction. Mediates ASK7/BIN2/SK21 inactivation both by competing with substrate binding (e.g. BZR1) and by promoting its ubiquitination and subsequent proteasomal degradation. The polypeptide is F-box protein KIB4 (Arabidopsis thaliana (Mouse-ear cress)).